Here is a 104-residue protein sequence, read N- to C-terminus: Protamine-2 (104 aa).

Residues 1–91 (MVRYRMRSPS…RRGCRRSRRR (91 aa)) form a disordered region. 3 positions are modified to phosphoserine: S8, S10, and S33. Basic and acidic residues predominate over residues 33-44 (SPERVEDYGRTE). Positions 45–91 (RGHHHRHRRCKRLHRIHKRRRSCRRRRRHSCRHRRRHRRGCRRSRRR) are enriched in basic residues.

It belongs to the protamine P2 family. In terms of assembly, interacts with TDRP. In terms of processing, proteolytic processing into mature chains is required for histone eviction during spermatogenesis. Transition proteins (TNP1 and TNP2) are required for processing. In terms of tissue distribution, testis.

The protein resides in the nucleus. The protein localises to the chromosome. Protamines substitute for histones in the chromatin of sperm during the haploid phase of spermatogenesis. They compact sperm DNA into a highly condensed, stable and inactive complex. This is Protamine-2 (Prm2) from Rattus norvegicus (Rat).